Here is a 288-residue protein sequence, read N- to C-terminus: Pantothenate synthetase (288 aa).

Residue 30-37 (MGFLHEGH) coordinates ATP. The active-site Proton donor is His-37. Gln-61 lines the (R)-pantoate pocket. Gln-61 is a binding site for beta-alanine. 147 to 150 (GLKD) serves as a coordination point for ATP. Position 153 (Gln-153) interacts with (R)-pantoate. ATP contacts are provided by residues Val-176 and 184 to 187 (KSSR).

Belongs to the pantothenate synthetase family. In terms of assembly, homodimer.

The protein resides in the cytoplasm. The enzyme catalyses (R)-pantoate + beta-alanine + ATP = (R)-pantothenate + AMP + diphosphate + H(+). Its pathway is cofactor biosynthesis; (R)-pantothenate biosynthesis; (R)-pantothenate from (R)-pantoate and beta-alanine: step 1/1. Functionally, catalyzes the condensation of pantoate with beta-alanine in an ATP-dependent reaction via a pantoyl-adenylate intermediate. The sequence is that of Pantothenate synthetase from Bacillus pumilus (strain SAFR-032).